We begin with the raw amino-acid sequence, 507 residues long: Glutamate--tRNA ligase (507 aa).

Positions 14-24 (PSPTGPLHIGG) match the 'HIGH' region motif. The 'KMSKS' region signature appears at 262 to 266 (KLSKR). Position 265 (Lys-265) interacts with ATP.

This sequence belongs to the class-I aminoacyl-tRNA synthetase family. Glutamate--tRNA ligase type 1 subfamily. In terms of assembly, monomer.

The protein resides in the cytoplasm. It catalyses the reaction tRNA(Glu) + L-glutamate + ATP = L-glutamyl-tRNA(Glu) + AMP + diphosphate. Catalyzes the attachment of glutamate to tRNA(Glu) in a two-step reaction: glutamate is first activated by ATP to form Glu-AMP and then transferred to the acceptor end of tRNA(Glu). The protein is Glutamate--tRNA ligase of Porphyromonas gingivalis (strain ATCC 33277 / DSM 20709 / CIP 103683 / JCM 12257 / NCTC 11834 / 2561).